The chain runs to 866 residues: DNA replication licensing factor MCM4 (866 aa).

Disordered stretches follow at residues 1–67 (MSSP…TSPA), 81–107 (SPLN…TPLR), and 124–145 (GGGS…PVSE). Polar residues-rich tracts occupy residues 47–63 (DNIS…SLPA) and 81–93 (SPLN…SMGS). S55 and S81 each carry phosphoserine. At T87 the chain carries Phosphothreonine. The MCM domain maps to 460–669 (IYDRLARAIA…FDKRLASHLV (210 aa)). Position 512 to 519 (512 to 519 (GDPGTSKS)) interacts with ATP. Residues 644 to 647 (SRFD) carry the Arginine finger motif.

It belongs to the MCM family. Component of the Mcm2-7 complex. The complex forms a toroidal hexameric ring with the proposed subunit order Mcm2-Mcm6-Mcm4-Mcm7-Mcm3-Mcm5. Post-translationally, phosphorylated by the catalytic component of the Dbf4-dependent kinase (DDK) complex Cdc7.

The protein resides in the nucleus. The catalysed reaction is ATP + H2O = ADP + phosphate + H(+). Functionally, acts as a component of the Mcm2-7 complex (Mcm complex) which is the putative replicative helicase essential for 'once per cell cycle' DNA replication initiation and elongation in eukaryotic cells. The active ATPase sites in the Mcm2-7 ring are formed through the interaction surfaces of two neighboring subunits such that a critical structure of a conserved arginine finger motif is provided in trans relative to the ATP-binding site of the Walker A box of the adjacent subunit. The six ATPase active sites, however, are likely to contribute differentially to the complex helicase activity. Required for DNA replication and cell proliferation. Essential role in mitotic DNA replication but not in endoreplication. The protein is DNA replication licensing factor MCM4 (dpa) of Drosophila melanogaster (Fruit fly).